The following is a 564-amino-acid chain: 5-aminolevulinate synthase, mitochondrial (564 aa).

Residues 1-57 (MESITKVSMSVCPFVRSTSTQALRQLSQTSGALANQARQCPIAGNAIRAKEISIRSY) constitute a mitochondrion transit peptide. The substrate site is built by Arg-113, Ser-226, and Lys-245. Positions 278, 306, and 350 each coordinate pyridoxal 5'-phosphate. Residue Lys-353 is part of the active site. An N6-(pyridoxal phosphate)lysine modification is found at Lys-353. Positions 382 and 383 each coordinate pyridoxal 5'-phosphate. Thr-468 lines the substrate pocket.

This sequence belongs to the class-II pyridoxal-phosphate-dependent aminotransferase family. In terms of assembly, homodimer. The cofactor is pyridoxal 5'-phosphate.

The protein resides in the mitochondrion matrix. It catalyses the reaction succinyl-CoA + glycine + H(+) = 5-aminolevulinate + CO2 + CoA. Its pathway is porphyrin-containing compound metabolism; protoporphyrin-IX biosynthesis; 5-aminolevulinate from glycine: step 1/1. Its function is as follows. Catalyzes the synthesis of 5-aminolevulinate (ALA) from succinyl-CoA and glycine, the first and rate-limiting step in heme biosynthesis. The polypeptide is 5-aminolevulinate synthase, mitochondrial (HEM1) (Candida albicans (strain SC5314 / ATCC MYA-2876) (Yeast)).